The chain runs to 370 residues: Cyclic AMP-responsive element-binding protein 3-like protein 4 (370 aa).

The segment at 1-55 (MELGCPELLEPPEDIFSTGSFLELGFNGPASKVPVTRGLQKSEPDDFLNLFIDPN) is required for transcriptional activation. Residues 1 to 271 (MELGCPELLE…QTSSRAAQTS (271 aa)) lie on the Cytoplasmic side of the membrane. Residues 61–85 (ETSPGRDSGVSEDPGSPAQQASSSP) form a disordered region. Low complexity predominate over residues 76–85 (SPAQQASSSP). Residues 193–256 (ILKKIRRKIR…IFLMEQVRQL (64 aa)) form the bZIP domain. The segment at 195 to 234 (KKIRRKIRNKQSAQDSRRRKKEYLDGLESRVAACSEQNQK) is basic motif. The segment at 235–256 (LQRKVQELERQNIFLMEQVRQL) is leucine-zipper. A helical; Signal-anchor for type II membrane protein membrane pass occupies residues 272–292 (TCVLILLFSLALIILPSFSPF). The Lumenal portion of the chain corresponds to 293-370 (QGQSEARPED…IRGMVHTDEM (78 aa)). N-linked (GlcNAc...) asparagine glycosylation is found at Asn318 and Asn342.

It belongs to the bZIP family. ATF subfamily. Binds DNA as a dimer. Forms a heterodimer with CREM isoform Tau. Post-translationally, controlled by regulated intramembrane proteolysis (RIP). Following ER stress a fragment containing the cytoplasmic transcription factor domain is released by proteolysis. The cleavage seems to be performed sequentially by site-1 and site-2 proteases (PS1 and PS2). PS1 cleavage may be suppressed by a determinant in the C-terminal region. In terms of tissue distribution, predominantly expressed at high levels in testis with isoform 2 being the predominant isoform. Specifically expressed in postmeiotic spermatids and accumulates in the mid/late stage (at protein level). Ubiquitously expressed at low levels.

Its subcellular location is the endoplasmic reticulum membrane. It localises to the cytoplasmic vesicle. It is found in the secretory vesicle. The protein resides in the acrosome inner membrane. The protein localises to the nucleus. In terms of biological role, transcriptional activator that may play a role in the unfolded protein response of the testis. Proposed to be involved in spermiogenesis. May be involved in regulating the maturation of sperm head nuclei. Alternatively proposed to be a paternally delivered transcription factor that may function in early zygotic gene activation. Increases the binding of CREM isoform Tau with CRE. The CREM isoform Tau-CREB3L4 heterodimer functions through CRE but not through UPRE and may recruit HIRA to CRE to regulate histone exchange. The sequence is that of Cyclic AMP-responsive element-binding protein 3-like protein 4 (Creb3l4) from Mus musculus (Mouse).